We begin with the raw amino-acid sequence, 174 residues long: Neuromedin-U (174 aa).

The N-terminal stretch at 1–34 is a signal peptide; it reads MLRTESCRPRSPAGQVAAASPLLLLLLLLAWCAG. A propeptide spanning residues 35–103 is cleaved from the precursor; sequence ACRGAPILPQ…EQDEKDNTKR (69 aa). Methionine sulfoxide; partial is present on M139. Residue N166 is modified to Asparagine amide. Residues 170–174 constitute a propeptide that is removed on maturation; it reads SAGFI.

It belongs to the NmU family. As to expression, expressed throughout the enteric nervous system with highest levels being found in the jejunum.

Its subcellular location is the secreted. Functionally, ligand for receptors NMUR1 and NMUR2. Stimulates muscle contractions of specific regions of the gastrointestinal tract. In humans, NmU stimulates contractions of the ileum and urinary bladder. Does not function as a ligand for either NMUR1 or NMUR2. Indirectly induces prolactin release although its potency is much lower than that of neuromedin precursor-related peptide 36. Its function is as follows. Does not function as a ligand for either NMUR1 or NMUR2. Indirectly induces prolactin release from lactotroph cells in the pituitary gland, probably via the hypothalamic dopaminergic system. In Homo sapiens (Human), this protein is Neuromedin-U (NMU).